A 208-amino-acid chain; its full sequence is N-(5'-phosphoribosyl)anthranilate isomerase (208 aa).

It belongs to the TrpF family.

It carries out the reaction N-(5-phospho-beta-D-ribosyl)anthranilate = 1-(2-carboxyphenylamino)-1-deoxy-D-ribulose 5-phosphate. It participates in amino-acid biosynthesis; L-tryptophan biosynthesis; L-tryptophan from chorismate: step 3/5. The protein is N-(5'-phosphoribosyl)anthranilate isomerase of Staphylococcus haemolyticus (strain JCSC1435).